The primary structure comprises 320 residues: V-set and transmembrane domain-containing protein 4 (320 aa).

Residues 1–23 (MRLLALAAAALLARAPAPEVCAA) form the signal peptide. Residues 24–155 (LNVTVSPGPV…SSATEMRVIS (132 aa)) form the Ig-like domain. Over 24-180 (LNVTVSPGPV…WAFFEDLYVY (157 aa)) the chain is Extracellular. Asn-25, Asn-41, Asn-89, and Asn-144 each carry an N-linked (GlcNAc...) asparagine glycan. Cys-46 and Cys-127 form a disulfide bridge. A helical transmembrane segment spans residues 181-201 (AVLVCCVGILSILLFMLVIVW). The Cytoplasmic portion of the chain corresponds to 202–320 (QSVFNKRKSR…AQILFEENKL (119 aa)).

Post-translationally, proteolytically cleaved to generate a bioactive peptide.

It localises to the secreted. The protein resides in the cell membrane. In terms of biological role, peptide Lv enhances L-type voltage-gated calcium channel (L-VGCC) currents in retinal photoreceptors. This Homo sapiens (Human) protein is V-set and transmembrane domain-containing protein 4 (VSTM4).